The chain runs to 138 residues: Small ribosomal subunit protein uS11c (138 aa).

Positions 1–24 (MAKSPPRSGSRRPGRIGSRKSGRR) are disordered. Residues 9–24 (GSRRPGRIGSRKSGRR) show a composition bias toward basic residues.

This sequence belongs to the universal ribosomal protein uS11 family. Part of the 30S ribosomal subunit.

The protein localises to the plastid. It is found in the chloroplast. The chain is Small ribosomal subunit protein uS11c from Citrus sinensis (Sweet orange).